The following is an 873-amino-acid chain: Calmodulin-dependent glutamylase SidJ (873 aa).

Residues 16–90 (QSEDNPSETA…TTSTTKQKGP (75 aa)) are disordered. Polar residues predominate over residues 22 to 58 (SETAVETTDVSTKIKTTDTTQEESSVKTKTVVPTQPG). Mg(2+) contacts are provided by Asp-542 and Asp-545. The interval 851 to 873 (NLSEKSDIDSEKPESERTTDKRL) is disordered.

Interacts with host calmodulin/CALM1; this interaction is required for glutamylase activity. Mg(2+) is required as a cofactor.

It catalyses the reaction L-glutamyl-[protein] + L-glutamate + ATP = gamma-L-glutamyl-L-glutamyl-[protein] + ADP + phosphate + H(+). The enzyme catalyses (L-glutamyl)(n)-gamma-L-glutamyl-L-glutamyl-[protein] + L-glutamate + ATP = (L-glutamyl)(n+1)-gamma-L-glutamyl-L-glutamyl-[protein] + ADP + phosphate + H(+). Glytamylation catalyzed by SidJ requires host calmodulin and can be regulated by intracellular changes in Ca2+ concentrations. Also requires ATP. In terms of biological role, glutamylase that mediates the covalent attachment of glutamate moieties to SdeA on one of the catalytic residues that is required for its mono-ADP-ribosyltransferase activity. In turn, inhibits SdeA ubiquitinating activity. Also glutamylates related SdeB, SdeC and SidE. Glutamylase activity only occurs in the host since it requires host calmodulin. May also reverse the SdeA-mediated substrate ubiquitination by cleaving the phosphodiester bond that links phosphoribosylated ubiquitin to protein substrates via its deubiquitinase activity. In Legionella pneumophila subsp. pneumophila (strain Philadelphia 1 / ATCC 33152 / DSM 7513), this protein is Calmodulin-dependent glutamylase SidJ.